Here is a 237-residue protein sequence, read N- to C-terminus: GrpE protein homolog, mitochondrial (237 aa).

The protein belongs to the GrpE family. As to quaternary structure, probable component of the PAM complex at least composed of a mitochondrial HSP70 protein, GrpE, tim-44, tim-16 and tim-14/dnj-21.

It is found in the mitochondrion matrix. Its function is as follows. Essential component of the PAM complex, a complex required for the translocation of transit peptide-containing proteins from the inner membrane into the mitochondrial matrix in an ATP-dependent manner. Seems to control the nucleotide-dependent binding of mitochondrial HSP70 to substrate proteins. The polypeptide is GrpE protein homolog, mitochondrial (Caenorhabditis elegans).